A 340-amino-acid chain; its full sequence is NADH-quinone oxidoreductase subunit H 2 (340 aa).

A run of 8 helical transmembrane segments spans residues 10–30 (LIVA…ILLL), 84–104 (FLFK…FVAI), 126–146 (VALL…IFGG), 172–192 (MGFA…LDIV), 198–218 (VWNI…GLAE), 255–275 (VIVL…WNGI), 279–299 (MPPL…FIWF), and 318–338 (VLLP…GAAA).

The protein belongs to the complex I subunit 1 family. In terms of assembly, NDH-1 is composed of 14 different subunits. Subunits NuoA, H, J, K, L, M, N constitute the membrane sector of the complex.

It localises to the cell inner membrane. The catalysed reaction is a quinone + NADH + 5 H(+)(in) = a quinol + NAD(+) + 4 H(+)(out). NDH-1 shuttles electrons from NADH, via FMN and iron-sulfur (Fe-S) centers, to quinones in the respiratory chain. The immediate electron acceptor for the enzyme in this species is believed to be ubiquinone. Couples the redox reaction to proton translocation (for every two electrons transferred, four hydrogen ions are translocated across the cytoplasmic membrane), and thus conserves the redox energy in a proton gradient. This subunit may bind ubiquinone. In Rhizobium etli (strain ATCC 51251 / DSM 11541 / JCM 21823 / NBRC 15573 / CFN 42), this protein is NADH-quinone oxidoreductase subunit H 2.